Consider the following 146-residue polypeptide: Hemoglobin subunit beta (146 aa).

Val-1 is subject to N-acetylvaline. In terms of domain architecture, Globin spans 2–146 (HLTPEEKALV…VANALAHKYH (145 aa)). Lys-59 is subject to N6-acetyllysine. His-63 serves as a coordination point for heme b. Lys-82 carries the N6-acetyllysine modification. His-92 serves as a coordination point for heme b. Cys-93 is modified (S-nitrosocysteine). Lys-144 is subject to N6-acetyllysine.

The protein belongs to the globin family. As to quaternary structure, heterotetramer of two alpha chains and two beta chains. In terms of tissue distribution, red blood cells.

Involved in oxygen transport from the lung to the various peripheral tissues. In Trichechus inunguis (Amazon manatee), this protein is Hemoglobin subunit beta (HBB).